Reading from the N-terminus, the 235-residue chain is Protein YIP4 (235 aa).

Transmembrane regions (helical) follow at residues 89 to 109 (ISAN…SLFV), 114 to 134 (SLFS…ALHL), 145 to 165 (LISY…NALV), 186 to 206 (VLSL…VAAV), and 215 to 235 (IIEI…STIL).

It belongs to the YIP1 family. As to quaternary structure, interacts with TVP18, TVP23, YIP1 and YIP5. Interacts with SEC4, YPT1, YPT6, YPT7, YPT10, YPT11, YPT31, YPT32 and YPT52; These proteins are all Rab GTPases.

It localises to the golgi apparatus membrane. May be involved in proper membrane localization of Rab GTPases. The chain is Protein YIP4 (YIP4) from Saccharomyces cerevisiae (strain ATCC 204508 / S288c) (Baker's yeast).